Here is a 308-residue protein sequence, read N- to C-terminus: Ribosomal RNA large subunit methyltransferase F (308 aa).

It belongs to the methyltransferase superfamily. METTL16/RlmF family.

The protein resides in the cytoplasm. It catalyses the reaction adenosine(1618) in 23S rRNA + S-adenosyl-L-methionine = N(6)-methyladenosine(1618) in 23S rRNA + S-adenosyl-L-homocysteine + H(+). Specifically methylates the adenine in position 1618 of 23S rRNA. The protein is Ribosomal RNA large subunit methyltransferase F of Shigella dysenteriae serotype 1 (strain Sd197).